The chain runs to 252 residues: MSAPRTCYGIIPARYASSRFPGKPLAEILGRPMFWHVYDRARRCAAFDEVALATDDARIADAANVLGVPCVMTAEHHPSGTDRVHEAAMRLGVPDDAVVVNIQGDEPALDPRMLDQLVAPFADASVRVATLAMALSAQEAQSPDRVKVVVAANGDALYFSRADIPFVRDGDVGGDTAGRLGHIGLYAFRMEALRRFTQLPPSRLEQTEKLEQLRLLENGIAIRVVPTTYRTHGVDRPEDIDVIINLLRENDG.

Belongs to the KdsB family.

The protein localises to the cytoplasm. The enzyme catalyses 3-deoxy-alpha-D-manno-oct-2-ulosonate + CTP = CMP-3-deoxy-beta-D-manno-octulosonate + diphosphate. Its pathway is nucleotide-sugar biosynthesis; CMP-3-deoxy-D-manno-octulosonate biosynthesis; CMP-3-deoxy-D-manno-octulosonate from 3-deoxy-D-manno-octulosonate and CTP: step 1/1. It functions in the pathway bacterial outer membrane biogenesis; lipopolysaccharide biosynthesis. Its function is as follows. Activates KDO (a required 8-carbon sugar) for incorporation into bacterial lipopolysaccharide in Gram-negative bacteria. The polypeptide is 3-deoxy-manno-octulosonate cytidylyltransferase (Nitratidesulfovibrio vulgaris (strain ATCC 29579 / DSM 644 / CCUG 34227 / NCIMB 8303 / VKM B-1760 / Hildenborough) (Desulfovibrio vulgaris)).